The following is a 604-amino-acid chain: Glutamine--fructose-6-phosphate aminotransferase [isomerizing] (604 aa).

Cys-2 functions as the Nucleophile; for GATase activity in the catalytic mechanism. The 217-residue stretch at 2–218 (CGIVGVVGNR…DKELVILTKD (217 aa)) folds into the Glutamine amidotransferase type-2 domain. SIS domains lie at 284–423 (IITS…ANGK) and 452–594 (VAEK…VDKP). Lys-599 (for Fru-6P isomerization activity) is an active-site residue.

In terms of assembly, homodimer.

It localises to the cytoplasm. The enzyme catalyses D-fructose 6-phosphate + L-glutamine = D-glucosamine 6-phosphate + L-glutamate. Its function is as follows. Catalyzes the first step in hexosamine metabolism, converting fructose-6P into glucosamine-6P using glutamine as a nitrogen source. This chain is Glutamine--fructose-6-phosphate aminotransferase [isomerizing], found in Streptococcus pyogenes serotype M3 (strain ATCC BAA-595 / MGAS315).